The following is a 192-amino-acid chain: Ribosome hibernation promotion factor (192 aa).

Positions 95 to 129 (RVNRKHKTHGEPEAFVAEVQEAPPENVDDVNAEPT) are disordered. The segment covering 120–129 (NVDDVNAEPT) has biased composition (acidic residues).

Belongs to the HPF/YfiA ribosome-associated protein family. Long HPF subfamily. In terms of assembly, interacts with 100S ribosomes.

Its subcellular location is the cytoplasm. In terms of biological role, required for dimerization of active 70S ribosomes into 100S ribosomes in stationary phase; 100S ribosomes are translationally inactive and sometimes present during exponential growth. In Staphylococcus haemolyticus (strain JCSC1435), this protein is Ribosome hibernation promotion factor.